Consider the following 627-residue polypeptide: Coiled-coil domain-containing protein 22 (627 aa).

The tract at residues 1-321 (MEEADRILIH…VADIPAASQR (321 aa)) is sufficient for interaction with COMMD1. The sufficicient and required for interaction with CCDC93 stretch occupies residues 1 to 447 (MEEADRILIH…LQDCRELESS (447 aa)). The stretch at 321 to 384 (RPEQDTRAAQ…SVAEQEQALR (64 aa)) forms a coiled coil. Phosphoserine is present on S410. Residues 448–535 (RRLVEIQELH…NSLSGKLDRT (88 aa)) are a coiled coil.

Belongs to the CCDC22 family. As to quaternary structure, component of the commander complex consisting of the CCC subcomplex and the retriever subcomplex. Component of the CCC (COMMD/CCDC22/CCDC93) subcomplex consisting of COMMD1, COMMD2, COMMD3, COMMD4, COMMD5, COMMD6, COMMD7, COMMD8, COMMD9, COMMD10, CCDC22 and CCDC93. Forms a coiled-coil heterodimer with CCDC22; this heterodimer interacts with the guanine nucleotide exchange factor DENND10; the interaction is direct. Interacts with CUL1, CUL2, CUL3, SKP1, BTRC. Interacts with SNX17 and SNX31. Interacts with CPNE1 and CPNE4.

It localises to the endosome. It is found in the cytoplasm. Its subcellular location is the cytoskeleton. The protein resides in the microtubule organizing center. The protein localises to the centrosome. Functionally, component of the commander complex that is essential for endosomal recycling of transmembrane cargos; the Commander complex is composed of composed of the CCC subcomplex and the retriever subcomplex. Component of the CCC complex, which is involved in the regulation of endosomal recycling of surface proteins, including integrins, signaling receptor and channels. Involved in regulation of NF-kappa-B signaling. Promotes ubiquitination of I-kappa-B-kinase subunit IKBKB and its subsequent proteasomal degradation leading to NF-kappa-B activation; the function may involve association with COMMD8 and a CUL1-dependent E3 ubiquitin ligase complex. May down-regulate NF-kappa-B activity via association with COMMD1 and involving a CUL2-dependent E3 ubiquitin ligase complex. Regulates the cellular localization of COMM domain-containing proteins, such as COMMD1 and COMMD10. Component of the CCC complex, which is involved in the regulation of endosomal recycling of surface proteins, including integrins, signaling receptor and channels. The CCC complex associates with SNX17, retriever and WASH complexes to prevent lysosomal degradation and promote cell surface recycling of numerous cargos such as integrins ITGA5:ITGB1. Plays a role in copper ion homeostasis. Involved in copper-dependent ATP7A trafficking between the trans-Golgi network and vesicles in the cell periphery; the function is proposed to depend on its association within the CCC complex and cooperation with the WASH complex on early endosomes. This Rattus norvegicus (Rat) protein is Coiled-coil domain-containing protein 22.